The chain runs to 203 residues: Probable host range protein 2-3 (203 aa).

The segment at 182-203 (LEEEDEEKIADTGNDNQKDAED) is disordered.

The protein belongs to the poxviridae C7 protein family.

Functionally, plays a role for multiplication of the virus in different cell types. In Myxoma virus (strain Lausanne) (MYXV), this protein is Probable host range protein 2-3.